The following is a 484-amino-acid chain: MAIVGSNSVSKKPKHTKRNDARDLAEKIKRNALKKQEQDKKQQLEEESKPESSQKSKNIVEVNPDDEVKFSTFSELKLVPELLEAIQQMKFSKPTPIQSEAIPHALEGKDIIGLAQTGSGKTAAFAIPILQSLWEAQTPYFGLVLAPARELAYQIKETFDALGSTMGVRTVCLVGGMDMMDQARDLMRKPHIIIATPGRIMDHLEHTKGFSLKMLKYFVMDEADKLLDLEFGPVLDKILKQIPSKRTTYLFSATMTNKIEKLQRASLHNPVRVAVSSKYQTADNLIQSMMLVSDGYKNTYLIHLLNEFVGKSIIIFARTRAHTQRTSILCRILGFSAVPLHGDLTQAQRLGSLNKFKSGTANILIATDVAARGLDIPSVDVVINYDIPTDSKAYVHRVGRTARAGRSGKSISLVTQYDLEMYLRIEQSIQKKLPKDPSPPKAMLDALHVHVDRAYAEAIRQTKEFHEKTRRGRRGKDDKDREEH.

The segment covering 1–10 (MAIVGSNSVS) has biased composition (polar residues). Residues 1 to 61 (MAIVGSNSVS…SSQKSKNIVE (61 aa)) form a disordered region. The span at 18–54 (RNDARDLAEKIKRNALKKQEQDKKQQLEEESKPESSQ) shows a compositional bias: basic and acidic residues. The short motif at 71–99 (STFSELKLVPELLEAIQQMKFSKPTPIQS) is the Q motif element. The Helicase ATP-binding domain maps to 102 to 273 (IPHALEGKDI…RASLHNPVRV (172 aa)). Position 115 to 122 (115 to 122 (AQTGSGKT)) interacts with ATP. A DEAD box motif is present at residues 221–224 (DEAD). The region spanning 300 to 444 (YLIHLLNEFV…KDPSPPKAML (145 aa)) is the Helicase C-terminal domain. The interval 460–484 (RQTKEFHEKTRRGRRGKDDKDREEH) is disordered. Over residues 475–484 (GKDDKDREEH) the composition is skewed to basic and acidic residues.

The protein belongs to the DEAD box helicase family. DDX47/RRP3 subfamily. In terms of assembly, interacts with the SSU processome.

It localises to the nucleus. It carries out the reaction ATP + H2O = ADP + phosphate + H(+). In terms of biological role, ATP-dependent rRNA helicase required for pre-ribosomal RNA processing. Involved in the maturation of the 35S-pre-rRNA and to its cleavage to mature 18S rRNA. This is ATP-dependent rRNA helicase RRP3 from Scheffersomyces stipitis (strain ATCC 58785 / CBS 6054 / NBRC 10063 / NRRL Y-11545) (Yeast).